Consider the following 273-residue polypeptide: Coiled-coil domain-containing protein 122 (273 aa).

Residues 1–17 (MSDNKERKSQGFPKEDN) show a composition bias toward basic and acidic residues. Residues 1–39 (MSDNKERKSQGFPKEDNQDTSSLADAVEKVAKQQQSQAS) form a disordered region. Coiled coils occupy residues 24-116 (ADAV…TAQE) and 179-269 (NRIT…RKCI).

In Homo sapiens (Human), this protein is Coiled-coil domain-containing protein 122 (CCDC122).